A 355-amino-acid polypeptide reads, in one-letter code: 3-dehydroquinate synthase (355 aa).

Residues Glu-71–Lys-76, Gly-105–Asp-109, Thr-129–Ser-130, Lys-142, and Lys-151 contribute to the NAD(+) site. Zn(2+) is bound by residues Glu-184, His-246, and His-263.

The protein belongs to the sugar phosphate cyclases superfamily. Dehydroquinate synthase family. The cofactor is Co(2+). Zn(2+) is required as a cofactor. Requires NAD(+) as cofactor.

The protein localises to the cytoplasm. It catalyses the reaction 7-phospho-2-dehydro-3-deoxy-D-arabino-heptonate = 3-dehydroquinate + phosphate. It functions in the pathway metabolic intermediate biosynthesis; chorismate biosynthesis; chorismate from D-erythrose 4-phosphate and phosphoenolpyruvate: step 2/7. In terms of biological role, catalyzes the conversion of 3-deoxy-D-arabino-heptulosonate 7-phosphate (DAHP) to dehydroquinate (DHQ). The polypeptide is 3-dehydroquinate synthase (Streptococcus pneumoniae (strain ATCC 700669 / Spain 23F-1)).